A 252-amino-acid chain; its full sequence is Imidazole glycerol phosphate synthase subunit HisF (252 aa).

Catalysis depends on residues Asp11 and Asp130.

The protein belongs to the HisA/HisF family. As to quaternary structure, heterodimer of HisH and HisF.

It localises to the cytoplasm. It catalyses the reaction 5-[(5-phospho-1-deoxy-D-ribulos-1-ylimino)methylamino]-1-(5-phospho-beta-D-ribosyl)imidazole-4-carboxamide + L-glutamine = D-erythro-1-(imidazol-4-yl)glycerol 3-phosphate + 5-amino-1-(5-phospho-beta-D-ribosyl)imidazole-4-carboxamide + L-glutamate + H(+). The protein operates within amino-acid biosynthesis; L-histidine biosynthesis; L-histidine from 5-phospho-alpha-D-ribose 1-diphosphate: step 5/9. In terms of biological role, IGPS catalyzes the conversion of PRFAR and glutamine to IGP, AICAR and glutamate. The HisF subunit catalyzes the cyclization activity that produces IGP and AICAR from PRFAR using the ammonia provided by the HisH subunit. The polypeptide is Imidazole glycerol phosphate synthase subunit HisF (Staphylococcus epidermidis (strain ATCC 12228 / FDA PCI 1200)).